Here is a 229-residue protein sequence, read N- to C-terminus: Potassium/proton antiporter CemA (229 aa).

3 helical membrane passes run 7–27, 106–126, and 189–209; these read LTPL…SISF, IILH…YSIL, and IISG…KYWI.

It belongs to the CemA family.

It localises to the plastid. Its subcellular location is the chloroplast inner membrane. It catalyses the reaction K(+)(in) + H(+)(out) = K(+)(out) + H(+)(in). Its function is as follows. Contributes to K(+)/H(+) antiport activity by supporting proton efflux to control proton extrusion and homeostasis in chloroplasts in a light-dependent manner to modulate photosynthesis. Prevents excessive induction of non-photochemical quenching (NPQ) under continuous-light conditions. Indirectly promotes efficient inorganic carbon uptake into chloroplasts. The polypeptide is Potassium/proton antiporter CemA (Liriodendron tulipifera (Tuliptree)).